We begin with the raw amino-acid sequence, 80 residues long: Omega-conotoxin-like 1 (80 aa).

An N-terminal signal peptide occupies residues 1–22 (MKLTCVLIVVVLFLTACQLITT). Positions 23-49 (DDSTGKQRYQAWKLRSKMQNSVLSRLS) are excised as a propeptide. Intrachain disulfides connect Cys52-Cys66, Cys59-Cys70, and Cys65-Cys79.

The protein belongs to the conotoxin O1 superfamily. Post-translationally, peptide predicted to begin at Arg-51, but it seems more probable that it begins at Cys-52, since this position corresponds to a dibasic residue cleavage. As to expression, expressed by the venom duct.

The protein localises to the secreted. In terms of biological role, omega-conotoxins act at presynaptic membranes, they bind and block voltage-gated calcium channels (Cav). The protein is Omega-conotoxin-like 1 of Conus capitaneus (Captain cone).